The chain runs to 320 residues: Cyclin-D6-1 (320 aa).

Residues 279–320 form a disordered region; that stretch reads HHRSASSESERTTTVGSAANSADAKRRCMGPPRQWGVGGPDE.

The protein belongs to the cyclin family. Cyclin D subfamily.

This is Cyclin-D6-1 (CYCD6-1) from Oryza sativa subsp. japonica (Rice).